The primary structure comprises 635 residues: tRNA 5-methylaminomethyl-2-thiouridine biosynthesis bifunctional protein MnmC (635 aa).

The tract at residues 1-231 (MPITPASLSF…KRQMLRGRYL (231 aa)) is tRNA (mnm(5)s(2)U34)-methyltransferase. An FAD-dependent cmnm(5)s(2)U34 oxidoreductase region spans residues 249–635 (IGAGVAGTSI…RPARTLRGED (387 aa)).

In the N-terminal section; belongs to the methyltransferase superfamily. tRNA (mnm(5)s(2)U34)-methyltransferase family. The protein in the C-terminal section; belongs to the DAO family. FAD is required as a cofactor.

The protein localises to the cytoplasm. It carries out the reaction 5-aminomethyl-2-thiouridine(34) in tRNA + S-adenosyl-L-methionine = 5-methylaminomethyl-2-thiouridine(34) in tRNA + S-adenosyl-L-homocysteine + H(+). Its function is as follows. Catalyzes the last two steps in the biosynthesis of 5-methylaminomethyl-2-thiouridine (mnm(5)s(2)U) at the wobble position (U34) in tRNA. Catalyzes the FAD-dependent demodification of cmnm(5)s(2)U34 to nm(5)s(2)U34, followed by the transfer of a methyl group from S-adenosyl-L-methionine to nm(5)s(2)U34, to form mnm(5)s(2)U34. The polypeptide is tRNA 5-methylaminomethyl-2-thiouridine biosynthesis bifunctional protein MnmC (Azoarcus sp. (strain BH72)).